The primary structure comprises 358 residues: Ion-translocating oxidoreductase complex subunit D (358 aa).

4 helical membrane-spanning segments follow: residues 19-39 (IMLW…YYFG), 41-61 (GVVL…FIAI), 79-99 (LTAL…IIII), and 125-145 (IGYV…MPPI). An FMN phosphoryl threonine modification is found at Thr186. A run of 5 helical transmembrane segments spans residues 220–240 (FAQG…FLIL), 248–268 (IPVA…FTGF), 271–291 (LSAI…FIAT), 297–317 (SITP…VYLI), and 321–341 (GNYP…VPLI).

It belongs to the NqrB/RnfD family. As to quaternary structure, the complex is composed of six subunits: RnfA, RnfB, RnfC, RnfD, RnfE and RnfG. FMN serves as cofactor.

The protein resides in the cell inner membrane. Its function is as follows. Part of a membrane-bound complex that couples electron transfer with translocation of ions across the membrane. This chain is Ion-translocating oxidoreductase complex subunit D, found in Haemophilus influenzae (strain 86-028NP).